The sequence spans 390 residues: Aspartate carbamoyltransferase, chloroplastic (390 aa).

The N-terminal 68 residues, 1–68 (MSIASSLTSA…NLTRNVGPVR (68 aa)), are a transit peptide targeting the chloroplast. 2 residues coordinate carbamoyl phosphate: R136 and T137. Residues R136 and T137 each coordinate UMP. An L-aspartate-binding site is contributed by K166. Carbamoyl phosphate contacts are provided by R187, H215, and Q218. R187 and H215 together coordinate UMP. The UMP site is built by R248 and R310. Residues R248 and R310 each contribute to the L-aspartate site. Residues L350 and P351 each contribute to the carbamoyl phosphate site.

Belongs to the aspartate/ornithine carbamoyltransferase superfamily. ATCase family. As to quaternary structure, homotrimer.

It is found in the plastid. Its subcellular location is the chloroplast. The enzyme catalyses carbamoyl phosphate + L-aspartate = N-carbamoyl-L-aspartate + phosphate + H(+). It functions in the pathway pyrimidine metabolism; UMP biosynthesis via de novo pathway; (S)-dihydroorotate from bicarbonate: step 2/3. Feedback inhibited by UMP. Functionally, catalyzes the condensation of carbamoyl phosphate and aspartate to form carbamoyl aspartate and inorganic phosphate, the committed step in the de novo pyrimidine nucleotide biosynthesis pathway. This is Aspartate carbamoyltransferase, chloroplastic (PYRB) from Arabidopsis thaliana (Mouse-ear cress).